The chain runs to 312 residues: Ubiquinone biosynthesis protein COQ9, mitochondrial (312 aa).

The transit peptide at 1–45 (MAATAAVSGVLRRLGWRLLQLRCLPVARCQSPLMPRAFHTAVGFR) directs the protein to the mitochondrion. Residues 17-32 (RLLQLRCLPVARCQSP) carry the SIFI-degron motif. A disordered region spans residues 43-92 (GFRSSEEQRQQPPHSSQQHSETQGPEFSRPPPRYTDQSGEEEEDYESEEQ). A compositionally biased stretch (low complexity) spans 52 to 63 (QQPPHSSQQHSE). Serine 80 bears the Phosphoserine mark. Acidic residues predominate over residues 80–91 (SGEEEEDYESEE). Lysine 169 is subject to N6-acetyllysine. An a 1,2-diacylglycero-3-phosphoethanolamine-binding site is contributed by arginine 238.

It belongs to the COQ9 family. In terms of assembly, homodimer. Heterodimer; two heterodimers of COQ7:COQ9 come together on the same side of the lipid pseudo-bilayer and form a curved tetramer with a hydrophobic surface suitable for membrane interaction. These two tetramers assemble into a soluble octamer with a pseudo-bilayer of lipids captured within. Interacts with COQ7; this interaction allows ubiquinone (CoQ) isoprene intermediates presentation to COQ7 and facilitates the COQ7-mediated hydroxylase step. In response to mitochondrial stress, the precursor protein is ubiquitinated by the SIFI complex in the cytoplasm before mitochondrial import, leading to its degradation. Within the SIFI complex, UBR4 initiates ubiquitin chain that are further elongated or branched by KCMF1.

The protein localises to the mitochondrion. It functions in the pathway cofactor biosynthesis; ubiquinone biosynthesis. Its function is as follows. Membrane-associated protein that warps the membrane surface to access and bind aromatic isoprenes with high specificity, including ubiquinone (CoQ) isoprene intermediates and presents them directly to COQ7, therefore facilitating the COQ7-mediated hydroxylase step. Participates in the biosynthesis of coenzyme Q, also named ubiquinone, an essential lipid-soluble electron transporter for aerobic cellular respiration. The sequence is that of Ubiquinone biosynthesis protein COQ9, mitochondrial from Rattus norvegicus (Rat).